The chain runs to 889 residues: Translation initiation factor IF-2 (889 aa).

The disordered stretch occupies residues 1–299 (MTDNKDDKTL…EKFKRSQMQE (299 aa)). The segment covering 61 to 76 (ITPVAATPAARPAEQR) has biased composition (low complexity). The segment covering 77-93 (PMPPQPSGRPAPQPQPH) has biased composition (pro residues). Residues 116-182 (MEARRRALAE…EAEKTEEKVE (67 aa)) are compositionally biased toward basic and acidic residues. Over residues 196–215 (RPQPGRAAPAATPAAPDGAA) the composition is skewed to low complexity. Positions 220-231 (RGTESEEDERRR) are enriched in basic and acidic residues. Residues 387–554 (SRPPIVTIMG…AILLQSEILD (168 aa)) form the tr-type G domain. The interval 396–403 (GHVDHGKT) is G1. 396–403 (GHVDHGKT) contacts GTP. The segment at 421-425 (GITQH) is G2. The G3 stretch occupies residues 442–445 (DTPG). GTP is bound by residues 442 to 446 (DTPGH) and 496 to 499 (NKID). Positions 496–499 (NKID) are G4. The interval 532–534 (SAK) is G5.

This sequence belongs to the TRAFAC class translation factor GTPase superfamily. Classic translation factor GTPase family. IF-2 subfamily.

It localises to the cytoplasm. In terms of biological role, one of the essential components for the initiation of protein synthesis. Protects formylmethionyl-tRNA from spontaneous hydrolysis and promotes its binding to the 30S ribosomal subunits. Also involved in the hydrolysis of GTP during the formation of the 70S ribosomal complex. This is Translation initiation factor IF-2 from Rhizobium meliloti (strain 1021) (Ensifer meliloti).